Consider the following 493-residue polypeptide: Acetylcholine receptor subunit epsilon (493 aa).

An N-terminal signal peptide occupies residues 1–20 (MARAPLGVLLLLGLLGRGVG). Over 21–239 (KNEELRLYHH…VIYSLIIRRK (219 aa)) the chain is Extracellular. 2 N-linked (GlcNAc...) asparagine glycosylation sites follow: Asn-86 and Asn-161. An intrachain disulfide couples Cys-148 to Cys-162. The chain crosses the membrane as a helical span at residues 240–264 (PLFYVINIIVPCVLISGLVLLAYFL). Topologically, residues 265 to 272 (PAQAGGQK) are cytoplasmic. The chain crosses the membrane as a helical span at residues 273–291 (CTVSINVLLAQTVFLFLIA). Over 292–306 (QKIPETSLSVPLLGR) the chain is Extracellular. A helical transmembrane segment spans residues 307–328 (FLIFVMVVATLIVMNCVIVLNV). Residues 329 to 456 (SQRTPTTHAM…WVRMGNALDN (128 aa)) lie on the Cytoplasmic side of the membrane. The chain crosses the membrane as a helical span at residues 457–480 (ICFWAALVLFSVGSSLIFLGAYFN). Topologically, residues 481–493 (RVPDLPYAPCIQP) are extracellular.

Belongs to the ligand-gated ion channel (TC 1.A.9) family. Acetylcholine receptor (TC 1.A.9.1) subfamily. Epsilon/CHRNE sub-subfamily. In terms of assembly, pentamer of two alpha chains, and one each of the beta, delta, and gamma (in immature muscle) or epsilon (in mature muscle) chains. The muscle heteropentamer composed of alpha-1, beta-1, delta, epsilon subunits interacts with the alpha-conotoxin ImII.

Its subcellular location is the postsynaptic cell membrane. It is found in the cell membrane. The enzyme catalyses K(+)(in) = K(+)(out). It catalyses the reaction Na(+)(in) = Na(+)(out). Functionally, after binding acetylcholine, the AChR responds by an extensive change in conformation that affects all subunits and leads to opening of an ion-conducting channel across the plasma membrane. The polypeptide is Acetylcholine receptor subunit epsilon (Homo sapiens (Human)).